Consider the following 113-residue polypeptide: Beta-microseminoprotein A1 (113 aa).

A signal peptide spans 1–20; that stretch reads MNVLLGGLVIFATFVTLCNG. Cystine bridges form between Cys22-Cys70, Cys38-Cys62, Cys57-Cys93, Cys60-Cys69, and Cys84-Cys107.

Belongs to the beta-microseminoprotein family.

It is found in the secreted. The polypeptide is Beta-microseminoprotein A1 (MSPA) (Saguinus oedipus (Cotton-top tamarin)).